We begin with the raw amino-acid sequence, 499 residues long: Probable cytochrome P450 cyp-35D1 (499 aa).

C444 serves as a coordination point for heme.

Belongs to the cytochrome P450 family. It depends on heme as a cofactor. Expressed in hypodermis, intestine and vulva upon thiabendazole (TBZ) exposure.

Functionally, cytochromes P450 are a group of heme-thiolate monooxygenases. They oxidize a variety of structurally unrelated compounds, including steroids, fatty acids, and xenobiotics. Involved in the oxidative metabolism of thiabendazole (TBZ). Catalyzes the conversion of TBZ to its hydroxylated form. This is Probable cytochrome P450 cyp-35D1 from Caenorhabditis elegans.